The following is a 714-amino-acid chain: MATTTAECLTQETMDYHALNAMLNLYDSAGRIQFDKDRQAVDAFIATHVRPNSVTFSSQQQRLNWLVNEGYYDESVLNRYSRDFVITLFTHAHTSGFRFQTFLGAWKFYTSYTLKTFDGKRYLEDFADRVTMVALTLAQGDETLALQLTDEMLSGRFQPATPTFLNCGKQQRGELVSCFLLRIEDNMESIGRAVNSALQLSKRGGGVAFLLSNLREAGAPIKRIENQSSGVIPVMKMLEDAFSYANQLGARQGAGAVYLHAHHPDILRFLDTKRENADEKIRIKTLSLGVVIPDITFHLAKENAQMALFSPYDVERVYGKPFADVAISQHYDELVADERIRKKYLNARDFFQRLAEIQFESGYPYIMYEDTVNRANPIAGRINMSNLCSEILQVNSASEYDENLDYTRTGHDISCNLGSLNIAHTMDSPDFARTVETAVRGLTAVSDMSHIRSVPSIEAGNAASHAIGLGQMNLHGYLAREGIAYGSPEALDFTNLYFYAITWHALRTSMLLARERGETFAGFKQSRYASGEYFSQYLQGNWQPKTAKVGELFTRSGITLPTREMWAQLRDDVMRYGIYNQNLQAVPPTGSISYINHATSSIHPIVAKVEIRKEGKTGRVYYPAPFMTNENLALYQDAYEIGAEKIIDTYAEATRHVDQGLSLTLFFPDTATTRDINKAQIYAWRKGIKTLYYIRLRQMALEGTEIEGCVSCAL.

Residues threonine 161, 177–178 (SC), glycine 206, 386–390 (NLCSE), and 588–592 (PTGSI) contribute to the substrate site. Cysteine 178 and cysteine 415 are disulfide-bonded. Asparagine 386 functions as the Proton acceptor in the catalytic mechanism. Residue cysteine 388 is the Cysteine radical intermediate of the active site. The active-site Proton acceptor is the glutamate 390.

This sequence belongs to the ribonucleoside diphosphate reductase large chain family. Tetramer of two alpha and two beta subunits.

It catalyses the reaction a 2'-deoxyribonucleoside 5'-diphosphate + [thioredoxin]-disulfide + H2O = a ribonucleoside 5'-diphosphate + [thioredoxin]-dithiol. Its activity is regulated as follows. Under complex allosteric control mediated by deoxynucleoside triphosphates and ATP binding. The type of nucleotide bound at the specificity site determines substrate preference. It seems probable that ATP makes the enzyme reduce CDP and UDP, dGTP favors ADP reduction and dTTP favors GDP reduction. Provides the precursors necessary for DNA synthesis. Catalyzes the biosynthesis of deoxyribonucleotides from the corresponding ribonucleotides. R1E contains the binding sites for both substrates and allosteric effectors and carries out the actual reduction of the ribonucleotide. The chain is Ribonucleoside-diphosphate reductase 2 subunit alpha (nrdE) from Escherichia coli (strain K12).